We begin with the raw amino-acid sequence, 154 residues long: Myoglobin (154 aa).

One can recognise a Globin domain in the interval 2-148 (VLSDAEWHLV…FRKDIAAKYK (147 aa)). Serine 4 bears the Phosphoserine mark. Histidine 65 serves as a coordination point for nitrite. Histidine 65 provides a ligand contact to O2. Threonine 68 carries the post-translational modification Phosphothreonine. Histidine 94 lines the heme b pocket.

This sequence belongs to the globin family. As to quaternary structure, monomeric.

It localises to the cytoplasm. The protein localises to the sarcoplasm. It carries out the reaction Fe(III)-heme b-[protein] + nitric oxide + H2O = Fe(II)-heme b-[protein] + nitrite + 2 H(+). The catalysed reaction is H2O2 + AH2 = A + 2 H2O. Monomeric heme protein which primary function is to store oxygen and facilitate its diffusion within muscle tissues. Reversibly binds oxygen through a pentacoordinated heme iron and enables its timely and efficient release as needed during periods of heightened demand. Depending on the oxidative conditions of tissues and cells, and in addition to its ability to bind oxygen, it also has a nitrite reductase activity whereby it regulates the production of bioactive nitric oxide. Under stress conditions, like hypoxia and anoxia, it also protects cells against reactive oxygen species thanks to its pseudoperoxidase activity. The protein is Myoglobin (MB) of Balaenoptera acutorostrata (Common minke whale).